Reading from the N-terminus, the 154-residue chain is 6,7-dimethyl-8-ribityllumazine synthase (154 aa).

5-amino-6-(D-ribitylamino)uracil-binding positions include F23, 57–59 (AFE), and 81–83 (AVI). 86–87 (ST) lines the (2S)-2-hydroxy-3-oxobutyl phosphate pocket. H89 serves as the catalytic Proton donor. F114 contacts 5-amino-6-(D-ribitylamino)uracil. Position 128 (R128) interacts with (2S)-2-hydroxy-3-oxobutyl phosphate.

The protein belongs to the DMRL synthase family.

The catalysed reaction is (2S)-2-hydroxy-3-oxobutyl phosphate + 5-amino-6-(D-ribitylamino)uracil = 6,7-dimethyl-8-(1-D-ribityl)lumazine + phosphate + 2 H2O + H(+). It participates in cofactor biosynthesis; riboflavin biosynthesis; riboflavin from 2-hydroxy-3-oxobutyl phosphate and 5-amino-6-(D-ribitylamino)uracil: step 1/2. Its function is as follows. Catalyzes the formation of 6,7-dimethyl-8-ribityllumazine by condensation of 5-amino-6-(D-ribitylamino)uracil with 3,4-dihydroxy-2-butanone 4-phosphate. This is the penultimate step in the biosynthesis of riboflavin. The polypeptide is 6,7-dimethyl-8-ribityllumazine synthase (Campylobacter jejuni subsp. doylei (strain ATCC BAA-1458 / RM4099 / 269.97)).